Here is a 128-residue protein sequence, read N- to C-terminus: MESKDQGAKNLNMENDHQKKEEKEEKPQDTIKREPVVAPTFEAGKNCAPRGGRRRFRVRQPIAHYRWDLMHRVGEPQGRMREENVQRFGEDMRQLMEKLRERQLSHSLRAVSTDPPHHDHHDEFCLMP.

The disordered stretch occupies residues 1–55 (MESKDQGAKNLNMENDHQKKEEKEEKPQDTIKREPVVAPTFEAGKNCAPRGGRRR). Residues 14-35 (ENDHQKKEEKEEKPQDTIKREP) show a composition bias toward basic and acidic residues. Position 105 is a phosphoserine; by PKB/AKT1 (S105). The interval 107–128 (SLRAVSTDPPHHDHHDEFCLMP) is disordered. A compositionally biased stretch (basic and acidic residues) spans 115 to 128 (PPHHDHHDEFCLMP). A his cluster region spans residues 117-121 (HHDHH). C125 lines the Zn(2+) pocket.

It belongs to the BEX family. As to quaternary structure, interacts with neurotrophin receptor p75NTR/NGFR. Interacts with OMP. In terms of processing, phosphorylated. Phosphorylation of Ser-105 protects it from the proteasome. Post-translationally, ubiquitinated. Degraded by the proteasome. Expressed in the central nervous system. Expressed in Schwann cells from newborn sciatic nerve.

It localises to the nucleus. The protein resides in the cytoplasm. In terms of biological role, signaling adapter molecule involved in p75NTR/NGFR signaling. Plays a role in cell cycle progression and neuronal differentiation. Inhibits neuronal differentiation in response to nerve growth factor (NGF). May act as a link between the cell cycle and neurotrophic factor signaling, possibly by functioning as an upstream modulator of receptor signaling, coordinating biological responses to external signals with internal cellular states. In absence of reductive stress, acts as a pseudosubstrate for the CRL2(FEM1B) complex: associates with FEM1B via zinc, thereby preventing association between FEM1B and its substrates. This is Protein BEX1 (Bex1) from Rattus norvegicus (Rat).